A 149-amino-acid polypeptide reads, in one-letter code: Large ribosomal subunit protein bL9 (149 aa).

It belongs to the bacterial ribosomal protein bL9 family.

Functionally, binds to the 23S rRNA. This Stenotrophomonas maltophilia (strain K279a) protein is Large ribosomal subunit protein bL9.